Reading from the N-terminus, the 290-residue chain is Nucleoid occlusion protein (290 aa).

Positions 153–172 (EALAQRLGKGQSTIANKLRL) form a DNA-binding region, H-T-H motif.

The protein belongs to the ParB family.

It is found in the cytoplasm. The protein resides in the nucleoid. Its function is as follows. Effects nucleoid occlusion by binding relatively nonspecifically to DNA and preventing the assembly of the division machinery in the vicinity of the nucleoid, especially under conditions that disturb the cell cycle. It helps to coordinate cell division and chromosome segregation by preventing the formation of the Z ring through the nucleoid, which would cause chromosome breakage. The sequence is that of Nucleoid occlusion protein from Bacillus cereus (strain ATCC 10987 / NRS 248).